A 129-amino-acid polypeptide reads, in one-letter code: Protein HMF1 (129 aa).

Lysine 52 participates in a covalent cross-link: Glycyl lysine isopeptide (Lys-Gly) (interchain with G-Cter in ubiquitin).

Belongs to the RutC family.

It is found in the cytoplasm. It localises to the nucleus. The protein resides in the mitochondrion intermembrane space. In Saccharomyces cerevisiae (strain ATCC 204508 / S288c) (Baker's yeast), this protein is Protein HMF1 (HMF1).